A 239-amino-acid chain; its full sequence is Endonuclease V (239 aa).

Residues Asp-50 and Asp-118 each coordinate Mg(2+).

The protein belongs to the endonuclease V family. The cofactor is Mg(2+).

Its subcellular location is the cytoplasm. It carries out the reaction Endonucleolytic cleavage at apurinic or apyrimidinic sites to products with a 5'-phosphate.. DNA repair enzyme involved in the repair of deaminated bases. Selectively cleaves double-stranded DNA at the second phosphodiester bond 3' to a deoxyinosine leaving behind the intact lesion on the nicked DNA. The polypeptide is Endonuclease V (Xylella fastidiosa (strain Temecula1 / ATCC 700964)).